A 245-amino-acid chain; its full sequence is Thiopurine S-methyltransferase (245 aa).

Residue 29 to 40 participates in S-adenosyl-L-methionine binding; it reads WQEKWVNHKTGF. A substrate-binding site is contributed by phenylalanine 40. Lysine 58 is subject to N6-acetyllysine. S-adenosyl-L-methionine-binding residues include leucine 69, glutamate 90, and arginine 152.

It belongs to the class I-like SAM-binding methyltransferase superfamily. TPMT family. In terms of assembly, monomer.

The protein resides in the cytoplasm. The catalysed reaction is S-adenosyl-L-methionine + a thiopurine = S-adenosyl-L-homocysteine + a thiopurine S-methylether.. The sequence is that of Thiopurine S-methyltransferase (TPMT) from Bos taurus (Bovine).